A 179-amino-acid chain; its full sequence is Shikimate kinase (179 aa).

22–27 serves as a coordination point for ATP; it reads GTGKSS. Ser26 is a binding site for Mg(2+). Asp44, Arg68, and Gly90 together coordinate substrate. Arg128 contacts ATP. Residue Arg147 coordinates substrate.

Belongs to the shikimate kinase family. As to quaternary structure, monomer. It depends on Mg(2+) as a cofactor.

The protein resides in the cytoplasm. The catalysed reaction is shikimate + ATP = 3-phosphoshikimate + ADP + H(+). It functions in the pathway metabolic intermediate biosynthesis; chorismate biosynthesis; chorismate from D-erythrose 4-phosphate and phosphoenolpyruvate: step 5/7. Functionally, catalyzes the specific phosphorylation of the 3-hydroxyl group of shikimic acid using ATP as a cosubstrate. The chain is Shikimate kinase from Geobacter metallireducens (strain ATCC 53774 / DSM 7210 / GS-15).